We begin with the raw amino-acid sequence, 121 residues long: Large ribosomal subunit protein bL12 (121 aa).

Belongs to the bacterial ribosomal protein bL12 family. Homodimer. Part of the ribosomal stalk of the 50S ribosomal subunit. Forms a multimeric L10(L12)X complex, where L10 forms an elongated spine to which 2 to 4 L12 dimers bind in a sequential fashion. Binds GTP-bound translation factors.

Functionally, forms part of the ribosomal stalk which helps the ribosome interact with GTP-bound translation factors. Is thus essential for accurate translation. This is Large ribosomal subunit protein bL12 from Lactobacillus delbrueckii subsp. bulgaricus (strain ATCC BAA-365 / Lb-18).